Here is a 249-residue protein sequence, read N- to C-terminus: Uridylate kinase (249 aa).

15–18 contributes to the ATP binding site; it reads KLSG. Residues 23–28 are involved in allosteric activation by GTP; the sequence is GDEGFG. UMP is bound at residue G57. Residues G58 and R62 each coordinate ATP. UMP-binding positions include D77 and 138–145; that span reads TGNPFFTT. Residues T165, Y171, and D174 each contribute to the ATP site.

It belongs to the UMP kinase family. Homohexamer.

The protein localises to the cytoplasm. The enzyme catalyses UMP + ATP = UDP + ADP. Its pathway is pyrimidine metabolism; CTP biosynthesis via de novo pathway; UDP from UMP (UMPK route): step 1/1. With respect to regulation, allosterically activated by GTP. Inhibited by UTP. Catalyzes the reversible phosphorylation of UMP to UDP. The protein is Uridylate kinase of Pseudoalteromonas translucida (strain TAC 125).